A 242-amino-acid chain; its full sequence is Pyridoxine 5'-phosphate synthase (242 aa).

Asn-6 is a 3-amino-2-oxopropyl phosphate binding site. 8–9 (DH) serves as a coordination point for 1-deoxy-D-xylulose 5-phosphate. Arg-17 lines the 3-amino-2-oxopropyl phosphate pocket. Catalysis depends on His-42, which acts as the Proton acceptor. 1-deoxy-D-xylulose 5-phosphate is bound by residues Arg-44 and His-49. Glu-69 (proton acceptor) is an active-site residue. Thr-99 serves as a coordination point for 1-deoxy-D-xylulose 5-phosphate. His-190 serves as the catalytic Proton donor. Residues Gly-191 and 212–213 (GH) contribute to the 3-amino-2-oxopropyl phosphate site.

Belongs to the PNP synthase family. Homooctamer; tetramer of dimers.

It localises to the cytoplasm. It catalyses the reaction 3-amino-2-oxopropyl phosphate + 1-deoxy-D-xylulose 5-phosphate = pyridoxine 5'-phosphate + phosphate + 2 H2O + H(+). It participates in cofactor biosynthesis; pyridoxine 5'-phosphate biosynthesis; pyridoxine 5'-phosphate from D-erythrose 4-phosphate: step 5/5. Catalyzes the complicated ring closure reaction between the two acyclic compounds 1-deoxy-D-xylulose-5-phosphate (DXP) and 3-amino-2-oxopropyl phosphate (1-amino-acetone-3-phosphate or AAP) to form pyridoxine 5'-phosphate (PNP) and inorganic phosphate. The chain is Pyridoxine 5'-phosphate synthase from Neisseria meningitidis serogroup A / serotype 4A (strain DSM 15465 / Z2491).